Consider the following 346-residue polypeptide: Biotin synthase (346 aa).

Residues 38-256 (RQVQVSTLLS…IAVARIMMPT (219 aa)) enclose the Radical SAM core domain. Residues C53, C57, and C60 each coordinate [4Fe-4S] cluster. [2Fe-2S] cluster is bound by residues C97, C128, C188, and R260.

It belongs to the radical SAM superfamily. Biotin synthase family. In terms of assembly, homodimer. [4Fe-4S] cluster is required as a cofactor. The cofactor is [2Fe-2S] cluster.

It catalyses the reaction (4R,5S)-dethiobiotin + (sulfur carrier)-SH + 2 reduced [2Fe-2S]-[ferredoxin] + 2 S-adenosyl-L-methionine = (sulfur carrier)-H + biotin + 2 5'-deoxyadenosine + 2 L-methionine + 2 oxidized [2Fe-2S]-[ferredoxin]. Its pathway is cofactor biosynthesis; biotin biosynthesis; biotin from 7,8-diaminononanoate: step 2/2. Catalyzes the conversion of dethiobiotin (DTB) to biotin by the insertion of a sulfur atom into dethiobiotin via a radical-based mechanism. The polypeptide is Biotin synthase (Escherichia coli O6:H1 (strain CFT073 / ATCC 700928 / UPEC)).